The sequence spans 197 residues: Penicillin-binding protein activator LpoB (197 aa).

The first 17 residues, 1 to 17 (MIKRMSGIALAALLLSG), serve as a signal peptide directing secretion. Cys18 is lipidated: N-palmitoyl cysteine. The S-diacylglycerol cysteine moiety is linked to residue Cys18. The tract at residues 23 to 57 (PRGETPSQPPAPTTPAKPSVVPTPTPPVVTPVPQP) is disordered. Pro residues predominate over residues 29-57 (SQPPAPTTPAKPSVVPTPTPPVVTPVPQP).

Belongs to the LpoB family. Interacts with PBP1b.

The protein localises to the cell outer membrane. Functionally, regulator of peptidoglycan synthesis that is essential for the function of penicillin-binding protein 1B (PBP1b). The protein is Penicillin-binding protein activator LpoB of Edwardsiella piscicida.